Consider the following 271-residue polypeptide: Urease accessory protein UreD (271 aa).

Belongs to the UreD family. UreD, UreF and UreG form a complex that acts as a GTP-hydrolysis-dependent molecular chaperone, activating the urease apoprotein by helping to assemble the nickel containing metallocenter of UreC. The UreE protein probably delivers the nickel.

Its subcellular location is the cytoplasm. In terms of biological role, required for maturation of urease via the functional incorporation of the urease nickel metallocenter. This is Urease accessory protein UreD from Haemophilus influenzae (strain PittGG).